The chain runs to 383 residues: MGLLCSRSRHHTEDTDENTQAAEIERRIEQEAKAEKHIRKLLLLGAGESGKSTIFKQIKLLFQTGFDEGELKSYVPVIHANVYQTIKLLHDGTKEFAQNETDSAKYMLSSESIAIGEKLSEIGGRLDYPRLTKDIAEGIETLWKDPAIQETCARGNELQVPDCTKYLMENLKRLSDINYIPTKEDVLYARVRTTGVVEIQFSPVGENKKSGEVYRLFDVGGQRNERRKWIHLFEGVTAVIFCAAISEYDQTLFEDEQKNRMMETKELFDWVLKQPCFEKTSFMLFLNKFDIFEKKVLDVPLNVCEWFRDYQPVSSGKQEIEHAYEFVKKKFEELYYQNTAPDRVDRVFKIYRTTALDQKLVKKTFKLVDETLRRRNLLEAGLL.

Residues 1 to 20 (MGLLCSRSRHHTEDTDENTQ) are disordered. Residue glycine 2 is the site of N-myristoyl glycine attachment. The S-palmitoyl cysteine moiety is linked to residue cysteine 5. The G-alpha domain occupies 37 to 383 (HIRKLLLLGA…RRNLLEAGLL (347 aa)). Residues 40 to 53 (KLLLLGAGESGKST) are G1 motif. The GTP site is built by glutamate 48, serine 49, glycine 50, lysine 51, serine 52, threonine 53, aspartate 162, leucine 187, tyrosine 188, threonine 193, glycine 221, asparagine 287, lysine 288, aspartate 290, and alanine 355. Residue serine 52 participates in Mg(2+) binding. The G2 motif stretch occupies residues 185–193 (DVLYARVRT). Residue threonine 193 participates in Mg(2+) binding. Positions 214-223 (YRLFDVGGQR) are G3 motif. The interval 283 to 290 (MLFLNKFD) is G4 motif. Positions 353 to 358 (TTALDQ) are G5 motif.

Belongs to the G-alpha family. G proteins are composed of 3 units; alpha, beta and gamma. The alpha chain contains the guanine nucleotide binding site. Interacts with RGS1, THF1, the pirin protein PRN1, GTG1 and GTG2. Binds to GCR1. May interact with ADT3. No interactions with RACK1A, RACK1B or RACK1C. Interacts with PLDALPHA1. Interacts with CAND2/PMTR1. Requires Mg(2+) as cofactor. As to expression, more abundant in roots and/or leaves.

It is found in the cell membrane. In terms of biological role, exhibits a fast rate of basal nucleotide exchange. Guanine nucleotide-binding proteins (G proteins) are involved as modulators or transducers in various transmembrane signaling systems. Together with GCR1, may regulate the cell cycle via a signaling cascade that uses phosphatidylinositol-specific phospholipase C (PI-PLC) as an effector and inositol 1,4,5-trisphosphate (IP(3)) as a second messenger. Promotes abscisic acid (ABA) responses in guard cells. Involved in the blue light (BL) signaling. Together with GCR1 and ADT3, required for BL-mediated synthesis of phenylpyruvate and subsequently of phenylalanine (Phe), in etiolated seedlings. Modulates root architecture (e.g. lateral root formation). Negatively regulated by RGS1. In collaboration with CAND2/PMTR1, regulates the melatonin-mediated stomatal closure involving H(2)O(2) and Ca(2+) signals. This is Guanine nucleotide-binding protein alpha-1 subunit from Arabidopsis thaliana (Mouse-ear cress).